Consider the following 194-residue polypeptide: Large ribosomal subunit protein uL18 (194 aa).

Belongs to the universal ribosomal protein uL18 family. Part of the 50S ribosomal subunit. Contacts the 5S and 23S rRNAs.

Functionally, this is one of the proteins that bind and probably mediate the attachment of the 5S RNA into the large ribosomal subunit, where it forms part of the central protuberance. This is Large ribosomal subunit protein uL18 from Methanococcus aeolicus (strain ATCC BAA-1280 / DSM 17508 / OCM 812 / Nankai-3).